The primary structure comprises 156 residues: Maintenance of carboxysome distribution protein B (156 aa).

A required for interaction with McdA:DNA complex region spans residues 1 to 55 (MSNNALDRLINKQKPKVPPRNDVVSESVSNDIKTQGQQELNTSLPPSDTKATPEE). The interval 1–79 (MSNNALDRLI…QKPKLSPDTF (79 aa)) is disordered. Over residues 24-50 (VSESVSNDIKTQGQQELNTSLPPSDTK) the composition is skewed to polar residues. The span at 51-63 (ATPEEMPTSHESE) shows a compositional bias: basic and acidic residues. Residues 122–156 (PEELAQVIQLAQERLSQRKAIADYKRAKTMQERFL) adopt a coiled-coil conformation.

Homodimerizes; may exist in higher order oligomers in solution. Forms a complex with McdA:DNA. Homohexamerizes, interacts with shell components of the carboxysome.

It is found in the carboxysome. In terms of biological role, mcdA and McdB together mediate carboxysome (Cb) spacing, size, ultrastructure and probably inheritance in the cell, together they prevent Cb aggregation. McdA is an ATPase that forms dynamic gradients on the nucleoid in response to adapter protein McdB, which associates with carboxysomes. The interplay between McdA gradients on the nucleoid and McdB-bound carboxysomes result in the equal spacing of Cbs along the cell length. Stimulates the ATPase activity of McdA, causing McdA to be released from DNA. Undergoes liquid-liquid phase separation. Its function is as follows. Incorrect positioning (aggregation) of carboxysomes results in reduced CO(2) fixation by encapsulated ribulose-1,5-bisphosphate carboxylase (RuBisCO, cbbL/cbbS), which leads to slower growth. The protein is Maintenance of carboxysome distribution protein B of Gloeothece citriformis (strain PCC 7424) (Cyanothece sp. (strain PCC 7424)).